A 148-amino-acid chain; its full sequence is MKVVFLKDVKGKGKKGEIKNVADGYAQNFLIKNGYAAEANAQALSQLDGQKKLEAKNAAAELAEAQALKEKLETLTVELKAKSGEGGRLFGSVSTKQIADALQKVHGIKIDKRKMTLNDGIRALGFTNVPVKLHHEVTATLKVHVTEE.

Belongs to the bacterial ribosomal protein bL9 family.

In terms of biological role, binds to the 23S rRNA. In Lysinibacillus sphaericus (strain C3-41), this protein is Large ribosomal subunit protein bL9.